Consider the following 560-residue polypeptide: uncharacterized protein (560 aa).

Transmembrane regions (helical) follow at residues 9–29, 61–81, 136–156, 305–325, and 442–462; these read LVITILLIVLGANWLLSSFLL, ILVPTGFPLTTGLGLSLKYKI, IGIANSIATVEGFTLSLASMM, SLQIWGKLFAVLLHGGSASFI, and VVLELYCPYAIMGPVAHTNFY.

The protein resides in the membrane. This is an uncharacterized protein from Saccharomyces cerevisiae (strain ATCC 204508 / S288c) (Baker's yeast).